A 358-amino-acid polypeptide reads, in one-letter code: tRNA-specific 2-thiouridylase MnmA (358 aa).

Residues alanine 6–serine 13 and methionine 32 each bind ATP. Cysteine 103 acts as the Nucleophile in catalysis. A disulfide bridge connects residues cysteine 103 and cysteine 201. Glycine 127 contacts ATP. Positions lysine 151–glutamine 153 are interaction with tRNA. Cysteine 201 acts as the Cysteine persulfide intermediate in catalysis.

Belongs to the MnmA/TRMU family.

The protein resides in the cytoplasm. The catalysed reaction is S-sulfanyl-L-cysteinyl-[protein] + uridine(34) in tRNA + AH2 + ATP = 2-thiouridine(34) in tRNA + L-cysteinyl-[protein] + A + AMP + diphosphate + H(+). Its function is as follows. Catalyzes the 2-thiolation of uridine at the wobble position (U34) of tRNA, leading to the formation of s(2)U34. This Thermotoga sp. (strain RQ2) protein is tRNA-specific 2-thiouridylase MnmA.